The sequence spans 196 residues: uncharacterized protein (196 aa).

The protein to H.influenzae HI_0431.

This is an uncharacterized protein from Escherichia coli (strain K12).